We begin with the raw amino-acid sequence, 397 residues long: Formate-dependent phosphoribosylglycinamide formyltransferase (397 aa).

N(1)-(5-phospho-beta-D-ribosyl)glycinamide contacts are provided by residues 21–22 (EL) and Glu81. ATP contacts are provided by residues Arg113, Lys154, 194–197 (EEYV), and Glu202. One can recognise an ATP-grasp domain in the interval 118–313 (KLAAEKVKVP…EFQIHVRSAL (196 aa)). Glu272 and Glu284 together coordinate Mg(2+). N(1)-(5-phospho-beta-D-ribosyl)glycinamide contacts are provided by residues Asp291, Lys361, and 368–369 (RR).

The protein belongs to the PurK/PurT family. Homodimer.

The enzyme catalyses N(1)-(5-phospho-beta-D-ribosyl)glycinamide + formate + ATP = N(2)-formyl-N(1)-(5-phospho-beta-D-ribosyl)glycinamide + ADP + phosphate + H(+). It functions in the pathway purine metabolism; IMP biosynthesis via de novo pathway; N(2)-formyl-N(1)-(5-phospho-D-ribosyl)glycinamide from N(1)-(5-phospho-D-ribosyl)glycinamide (formate route): step 1/1. Functionally, involved in the de novo purine biosynthesis. Catalyzes the transfer of formate to 5-phospho-ribosyl-glycinamide (GAR), producing 5-phospho-ribosyl-N-formylglycinamide (FGAR). Formate is provided by PurU via hydrolysis of 10-formyl-tetrahydrofolate. This is Formate-dependent phosphoribosylglycinamide formyltransferase from Sulfurisphaera tokodaii (strain DSM 16993 / JCM 10545 / NBRC 100140 / 7) (Sulfolobus tokodaii).